We begin with the raw amino-acid sequence, 49 residues long: Fungus-induced-related protein 16 (49 aa).

This chain is Fungus-induced-related protein 16 (fipr-16), found in Caenorhabditis elegans.